We begin with the raw amino-acid sequence, 89 residues long: Cell division topological specificity factor (89 aa).

The protein belongs to the MinE family.

Functionally, prevents the cell division inhibition by proteins MinC and MinD at internal division sites while permitting inhibition at polar sites. This ensures cell division at the proper site by restricting the formation of a division septum at the midpoint of the long axis of the cell. The polypeptide is Cell division topological specificity factor (Yersinia pestis bv. Antiqua (strain Angola)).